A 241-amino-acid polypeptide reads, in one-letter code: Probable cobalt-factor III C(17)-methyltransferase (241 aa).

Belongs to the precorrin methyltransferase family.

The enzyme catalyses Co(II)-factor III + S-adenosyl-L-methionine + H(+) = Co(II)-factor IV + S-adenosyl-L-homocysteine. The protein operates within cofactor biosynthesis; adenosylcobalamin biosynthesis; cob(II)yrinate a,c-diamide from sirohydrochlorin (anaerobic route): step 3/10. Methyltransferase that likely catalyzes the ring contraction and methylation of C-17 in cobalt-factor III to form cobalt-factor IV. May also convert cobalt-precorrin-3 to cobalt-precorrin-4. This chain is Probable cobalt-factor III C(17)-methyltransferase (cbiH), found in Salmonella typhimurium (strain LT2 / SGSC1412 / ATCC 700720).